Reading from the N-terminus, the 315-residue chain is MRQTLCDGYLVIFALAQAVILLMLTPLFTGISRQIRARMHSRRGPGIWQDYRDIHKLFKRQEVAPTSSGLMFRLMPWVLISSMLVLAMALPLFITVSPFAGGGDLITLIYLLALFRFFFALSGLDTGSPFAGVGASRELTLGILVEPMLILSLLVLALIAGSTHIEMISNTLAMGWNSPLTTVLALLACGFACFIEMGKIPFDVAEAEQELQEGPLTEYSGAGLALAKWGLGLKQVVMASLFVALFLPFGRAQELSLACLLTSLVVTLLKVLLIFVLASIAENTLARGRFLLIHHVTWLGFSLAALAWVFWLTGL.

Topologically, residues 1–10 (MRQTLCDGYL) are periplasmic. A helical transmembrane segment spans residues 11–31 (VIFALAQAVILLMLTPLFTGI). At 32 to 73 (SRQIRARMHSRRGPGIWQDYRDIHKLFKRQEVAPTSSGLMFR) the chain is on the cytoplasmic side. A helical transmembrane segment spans residues 74 to 94 (LMPWVLISSMLVLAMALPLFI). The Periplasmic portion of the chain corresponds to 95–98 (TVSP). The chain crosses the membrane as a helical span at residues 99 to 119 (FAGGGDLITLIYLLALFRFFF). Residues 120–140 (ALSGLDTGSPFAGVGASRELT) lie on the Cytoplasmic side of the membrane. A helical transmembrane segment spans residues 141–161 (LGILVEPMLILSLLVLALIAG). At 162-181 (STHIEMISNTLAMGWNSPLT) the chain is on the periplasmic side. A helical membrane pass occupies residues 182 to 202 (TVLALLACGFACFIEMGKIPF). Topologically, residues 203–228 (DVAEAEQELQEGPLTEYSGAGLALAK) are cytoplasmic. A helical membrane pass occupies residues 229–249 (WGLGLKQVVMASLFVALFLPF). Topologically, residues 250-256 (GRAQELS) are periplasmic. The helical transmembrane segment at 257 to 277 (LACLLTSLVVTLLKVLLIFVL) threads the bilayer. Residues 278-289 (ASIAENTLARGR) are Cytoplasmic-facing. The chain crosses the membrane as a helical span at residues 290–310 (FLLIHHVTWLGFSLAALAWVF). The Periplasmic portion of the chain corresponds to 311-315 (WLTGL).

The protein belongs to the complex I subunit 1 family.

The protein localises to the cell inner membrane. Its function is as follows. Possible component of hydrogenase 4. In Escherichia coli (strain K12), this protein is Hydrogenase-4 component C.